A 41-amino-acid polypeptide reads, in one-letter code: Alpha-conotoxin-like Pu1.2 (41 aa).

The propeptide occupies 1–21; it reads LDGRNAAADFETSDLLAMTIR. 2 disulfides stabilise this stretch: Cys24–Cys30 and Cys25–Cys37. Cys37 carries the cysteine amide modification. The propeptide occupies 38–41; that stretch reads GGKR.

It belongs to the conotoxin A superfamily. Post-translationally, non-native isomers 'ribbon' (with disulfide connectivity C1-C4, C2-C3) and 'beads' (with disulfide connectivity C1-C2, C3-C4) also inhibit high voltage-activated (HVA) calcium channel currents in rat DRG neurons (25-30% inhibition at 1 uM toxin). Mutants Pu1.2(9-16), [C3S; C9S]Pu1.2 and [C4S]Pu1.2(1-9) are all C-terminally amidated. Expressed by the venom duct.

Its subcellular location is the secreted. Its function is as follows. Alpha-conotoxins act on postsynaptic membranes, they bind to the nicotinic acetylcholine receptors (nAChR) and thus inhibit them. This toxin also inhibits high voltage-activated (HVA) calcium channel currents in rat DRG neurons (27% inhibition at 1 uM toxin) probably by activating GABA(B) receptors (GABBR1 and/or GABBR2). The chain is Alpha-conotoxin-like Pu1.2 from Conus pulicarius (Flea-bitten cone).